Here is a 257-residue protein sequence, read N- to C-terminus: Ribosome maturation factor RimP (257 aa).

Residues 182-257 (LRRGGPPAAD…SRLKDRDSLH (76 aa)) form a disordered region. Acidic residues predominate over residues 191-205 (DEADEAEEAEDEEVA). A compositionally biased stretch (low complexity) spans 224 to 236 (KASPAAKPQKQAR).

It belongs to the RimP family.

It is found in the cytoplasm. Its function is as follows. Required for maturation of 30S ribosomal subunits. This is Ribosome maturation factor RimP from Methylobacterium radiotolerans (strain ATCC 27329 / DSM 1819 / JCM 2831 / NBRC 15690 / NCIMB 10815 / 0-1).